We begin with the raw amino-acid sequence, 124 residues long: Small ribosomal subunit protein bS6 (124 aa).

This sequence belongs to the bacterial ribosomal protein bS6 family.

In terms of biological role, binds together with bS18 to 16S ribosomal RNA. The protein is Small ribosomal subunit protein bS6 of Rippkaea orientalis (strain PCC 8801 / RF-1) (Cyanothece sp. (strain PCC 8801)).